The sequence spans 334 residues: Fructose-1,6-bisphosphatase class 1 2 (334 aa).

Positions 92, 114, 116, and 117 each coordinate Mg(2+). Substrate-binding positions include 117–120 (DGSS), Asn-208, and Lys-274. Glu-280 is a binding site for Mg(2+).

This sequence belongs to the FBPase class 1 family. In terms of assembly, homotetramer. Mg(2+) serves as cofactor.

It is found in the cytoplasm. The enzyme catalyses beta-D-fructose 1,6-bisphosphate + H2O = beta-D-fructose 6-phosphate + phosphate. It participates in carbohydrate biosynthesis; gluconeogenesis. The chain is Fructose-1,6-bisphosphatase class 1 2 from Albidiferax ferrireducens (strain ATCC BAA-621 / DSM 15236 / T118) (Rhodoferax ferrireducens).